The primary structure comprises 341 residues: Putative amino-acid ABC transporter-binding protein YhdW (341 aa).

Residues 1–19 (MKKMMIATLAAASVLLAVA) form the signal peptide.

It belongs to the bacterial solute-binding protein 3 family.

Its subcellular location is the periplasm. Functionally, probably part of the binding-protein-dependent transport system YdhWXYZ for an amino acid. The polypeptide is Putative amino-acid ABC transporter-binding protein YhdW (yhdW) (Escherichia coli O157:H7).